A 1621-amino-acid polypeptide reads, in one-letter code: ABC transporter A family member 2 (1621 aa).

7 helical membrane-spanning segments follow: residues 30 to 50 (ILFP…VMAF), 234 to 254 (SVFI…DLVI), 276 to 296 (ISWM…ISII), 309 to 329 (GVVI…AFIL), 338 to 358 (FCGL…IFVA), 365 to 385 (GAKL…IFAM), and 405 to 425 (NQVI…VWYL). The ABC transporter 1 domain occupies 484–717 (ISIRNLRKEY…FGCGYLLTCS (234 aa)). 520-527 (GPNGSGKS) provides a ligand contact to ATP. The next 7 membrane-spanning stretches (helical) occupy residues 856–876 (FFLT…MYKA), 1033–1053 (IVYF…SFAG), 1083–1103 (VWDY…LAGI), 1111–1131 (FGLM…LSYL), 1142–1162 (ATGA…IISL), 1183–1203 (VDIV…LFLV), and 1227–1247 (GSPM…IMIL). The region spanning 1293–1528 (LQFRNLHKLF…FGAGYTFDVK (236 aa)) is the ABC transporter 2 domain. 1331–1338 (GLNGAGKT) provides a ligand contact to ATP.

The protein belongs to the ABC transporter superfamily. ABCA family.

Its subcellular location is the membrane. The protein is ABC transporter A family member 2 (abcA2) of Dictyostelium discoideum (Social amoeba).